Here is an 84-residue protein sequence, read N- to C-terminus: METVITTTIIASAILLAVAALGTALGFAILGGKFLESSARQPELASSLQIKMFIVAGLLDAISMIAVGIALLFIFANPFIDLLK.

Helical transmembrane passes span 9–29 (IIAS…GFAI) and 54–74 (IVAG…LLFI).

This sequence belongs to the ATPase C chain family. In terms of assembly, F-type ATPases have 2 components, F(1) - the catalytic core - and F(0) - the membrane proton channel. F(1) has five subunits: alpha(3), beta(3), gamma(1), delta(1), epsilon(1). F(0) has three main subunits: a(1), b(2) and c(10-14). The alpha and beta chains form an alternating ring which encloses part of the gamma chain. F(1) is attached to F(0) by a central stalk formed by the gamma and epsilon chains, while a peripheral stalk is formed by the delta and b chains.

It localises to the cell inner membrane. Functionally, f(1)F(0) ATP synthase produces ATP from ADP in the presence of a proton or sodium gradient. F-type ATPases consist of two structural domains, F(1) containing the extramembraneous catalytic core and F(0) containing the membrane proton channel, linked together by a central stalk and a peripheral stalk. During catalysis, ATP synthesis in the catalytic domain of F(1) is coupled via a rotary mechanism of the central stalk subunits to proton translocation. Its function is as follows. Key component of the F(0) channel; it plays a direct role in translocation across the membrane. A homomeric c-ring of between 10-14 subunits forms the central stalk rotor element with the F(1) delta and epsilon subunits. This Pasteurella multocida (strain Pm70) protein is ATP synthase subunit c.